The following is a 219-amino-acid chain: Proteasome subunit beta (219 aa).

Residues 1–14 constitute a propeptide, removed in mature form; by autocatalysis; sequence MISGSEYHKEYMKG. Thr-15 functions as the Nucleophile in the catalytic mechanism.

The protein belongs to the peptidase T1B family. In terms of assembly, the 20S proteasome core is composed of 14 alpha and 14 beta subunits that assemble into four stacked heptameric rings, resulting in a barrel-shaped structure. The two inner rings, each composed of seven catalytic beta subunits, are sandwiched by two outer rings, each composed of seven alpha subunits. The catalytic chamber with the active sites is on the inside of the barrel. Has a gated structure, the ends of the cylinder being occluded by the N-termini of the alpha-subunits. Is capped at one or both ends by the proteasome regulatory ATPase, PAN.

The protein localises to the cytoplasm. It catalyses the reaction Cleavage of peptide bonds with very broad specificity.. The formation of the proteasomal ATPase PAN-20S proteasome complex, via the docking of the C-termini of PAN into the intersubunit pockets in the alpha-rings, triggers opening of the gate for substrate entry. Interconversion between the open-gate and close-gate conformations leads to a dynamic regulation of the 20S proteasome proteolysis activity. Functionally, component of the proteasome core, a large protease complex with broad specificity involved in protein degradation. This Methanococcus vannielii (strain ATCC 35089 / DSM 1224 / JCM 13029 / OCM 148 / SB) protein is Proteasome subunit beta.